We begin with the raw amino-acid sequence, 1348 residues long: MMVLEGASALSPFRRARLETRLQTLVPALRLTGAWHVYFIRADAGRTPDQATLQRILQAEPAPAPRDEAASSRYVVPRLGTLSPWSSKATELMRGAGQPIQRVERGTRIDLAGWPEGEADQAAVAKLLHDPMTQSLLGSAAAAEALFNVPDPGQLERIPLDALEQANGDLGLALAQDEIDYLRERFAALGRDPADVELMMFAQANSEHCRHKIFNASWTIDGKPQERSLFRMIKHTHQQTPQHTLSAYSDNAAVVEGVPAARFRPDPATGEYRSEAVVPSAFAIKVETHNHPTAIAPFPGAATGAGGEIRDEGATGRGGKPKAGLTGFSVSHLRIPTLPQPWEAPRALNPRMAPALDIMLDGPLGGAAFNNEFGRPNLLGYFRSFELAEGQGLTRAYDKPIMLAGGLGAIDRNQVEKLRLQPGDAVIVLGGPAMLIGLGGGAASSVAAGDSAEALDFASVQRENPEMERRCQEVIDHCVALGTDNPIRWFHDVGAGGLSNAIPELLHDSGVGGVIDLARVPSDDPSLSPLELWCNESQERYVLGVPQARLDEFAAICARERCPFAAVGVATAEERLVVGYGVFDAANRESGIGNRNSALPAAEAASAHSLFPTPDSPLPINLPMDVLFGKAPKMHRDAVHPAAPQWPVLQTGALDLQEAGLRVLAHPTVASKSFLVTIGDRSVGGLTAREQMIGPWQLPLADCAITLAGFETFDGEAMSIGERTPLALLNAAASARMAVGEAITNLCAAPVQTLDSIKLSANWMAAAGHAGEDALLYDAVRAVGMELCPALELSIPVGKDSLSMQAQWQVGNGESGIGNGETPAPSASAIPDSRLPIPGETLKSVSPVSLIISAFAPVSDVRTQLTPLLQREDESELWLIGLGGGKQRLGGSVLAQVYADDSALPAFGGETPDLDDPQRLRQFFELIRDAREGGLLLAYHDRSDGGAFAALCEMAFASRQGLDITLDAWGDDAFRSLFNEELGAVVQIANEDRAAFADLVERHALTECAQRIARPTGTPRVRVSGQGRVLAEWRWEALFDAWWSVTHAMQKLRDNPDSADEERAVARNFQAPGLRPKLVFDPSEDVAAPFVATGARPKVAILREQGVNGQIEMAYNFERAGFRAFDVHMSDLIEGRVDLAQFAGFAACGGFSYGDVLGAGRGWATSILERAALRDAFAAFFARSDTFALGVCNGCQMLSQLKDIIPGAEHWPRFLRNRSEQFEARTALLEVVESPSILLRGMAGSRIPVAVAHGEGRAEFDTAVDQAAARVALRFIDGDGAVASQYPLNPNGSPDGITGLTSTDGRATILMPHPERTPRSVNLSWHPAGWGEDSPWLRMFRNARVWCG.

Residues 300-311 (GAATGAGGEIRD) and A701 each bind ATP. Residues D702, E741, N745, and D941 each coordinate Mg(2+). S943 contributes to the ATP binding site. Positions 1099–1348 (VAILREQGVN…MFRNARVWCG (250 aa)) constitute a Glutamine amidotransferase type-1 domain. Catalysis depends on C1192, which acts as the Nucleophile. Catalysis depends on residues H1313 and E1315.

The protein in the N-terminal section; belongs to the FGAMS family. Monomer.

The protein localises to the cytoplasm. It catalyses the reaction N(2)-formyl-N(1)-(5-phospho-beta-D-ribosyl)glycinamide + L-glutamine + ATP + H2O = 2-formamido-N(1)-(5-O-phospho-beta-D-ribosyl)acetamidine + L-glutamate + ADP + phosphate + H(+). It participates in purine metabolism; IMP biosynthesis via de novo pathway; 5-amino-1-(5-phospho-D-ribosyl)imidazole from N(2)-formyl-N(1)-(5-phospho-D-ribosyl)glycinamide: step 1/2. Functionally, phosphoribosylformylglycinamidine synthase involved in the purines biosynthetic pathway. Catalyzes the ATP-dependent conversion of formylglycinamide ribonucleotide (FGAR) and glutamine to yield formylglycinamidine ribonucleotide (FGAM) and glutamate. This chain is Phosphoribosylformylglycinamidine synthase, found in Xanthomonas campestris pv. campestris (strain ATCC 33913 / DSM 3586 / NCPPB 528 / LMG 568 / P 25).